Reading from the N-terminus, the 251-residue chain is 4-hydroxy-tetrahydrodipicolinate reductase (251 aa).

8–13 is a binding site for NAD(+); that stretch reads GALGRM. An NADP(+)-binding site is contributed by arginine 36. NAD(+)-binding positions include 89–91 and 113–116; these read GTT and TTNF. Residue histidine 145 is the Proton donor/acceptor of the active site. Histidine 146 is a (S)-2,3,4,5-tetrahydrodipicolinate binding site. Lysine 149 functions as the Proton donor in the catalytic mechanism. 155 to 156 is a (S)-2,3,4,5-tetrahydrodipicolinate binding site; sequence GT.

It belongs to the DapB family.

The protein resides in the cytoplasm. The enzyme catalyses (S)-2,3,4,5-tetrahydrodipicolinate + NAD(+) + H2O = (2S,4S)-4-hydroxy-2,3,4,5-tetrahydrodipicolinate + NADH + H(+). The catalysed reaction is (S)-2,3,4,5-tetrahydrodipicolinate + NADP(+) + H2O = (2S,4S)-4-hydroxy-2,3,4,5-tetrahydrodipicolinate + NADPH + H(+). It functions in the pathway amino-acid biosynthesis; L-lysine biosynthesis via DAP pathway; (S)-tetrahydrodipicolinate from L-aspartate: step 4/4. In terms of biological role, catalyzes the conversion of 4-hydroxy-tetrahydrodipicolinate (HTPA) to tetrahydrodipicolinate. In Methanocorpusculum labreanum (strain ATCC 43576 / DSM 4855 / Z), this protein is 4-hydroxy-tetrahydrodipicolinate reductase.